The chain runs to 431 residues: Glucose-1-phosphate adenylyltransferase (431 aa).

Residue K39 participates in beta-D-fructose 1,6-bisphosphate binding. 3 residues coordinate AMP: R40, H46, and R52. Alpha-D-glucose 1-phosphate-binding positions include Y114, G179, 194–195 (EK), and S212. Residues E370 and R386 each coordinate AMP. Beta-D-fructose 1,6-bisphosphate-binding positions include 419 to 423 (REMLR) and 429 to 431 (QER).

The protein belongs to the bacterial/plant glucose-1-phosphate adenylyltransferase family. In terms of assembly, homotetramer.

It catalyses the reaction alpha-D-glucose 1-phosphate + ATP + H(+) = ADP-alpha-D-glucose + diphosphate. It participates in glycan biosynthesis; glycogen biosynthesis. Its activity is regulated as follows. Allosterically activated by fructose-1,6-bisphosphate (F16BP) and inhibited by AMP. Involved in the biosynthesis of ADP-glucose, a building block required for the elongation reactions to produce glycogen. Catalyzes the reaction between ATP and alpha-D-glucose 1-phosphate (G1P) to produce pyrophosphate and ADP-Glc. This Salmonella typhi protein is Glucose-1-phosphate adenylyltransferase.